A 549-amino-acid polypeptide reads, in one-letter code: CDK5RAP3 protein homolog (549 aa).

3 short sequence motifs (shuffled ATG8-binding motif) span residues 274–277 (IDWD), 285–288 (IDWD), and 333–336 (ISWD).

The protein belongs to the CDK5RAP3 family. Substrate adapter component of the UFM1 ribosome E3 ligase (UREL) complex. Interacts with ATG8 family proteins.

In terms of biological role, substrate adapter of E3 ligase complexes mediating ufmylation, the covalent attachment of the ubiquitin-like modifier UFM1 to substrate proteins, and which is involved in various processes, such as ribosome recycling and reticulophagy (also called ER-phagy). This is CDK5RAP3 protein homolog from Arabidopsis thaliana (Mouse-ear cress).